A 350-amino-acid chain; its full sequence is Biotin synthase (350 aa).

One can recognise a Radical SAM core domain in the interval 41-268 (NEVQISRLLS…KSRVRLSAGR (228 aa)). [4Fe-4S] cluster is bound by residues Cys-56, Cys-60, and Cys-63. [2Fe-2S] cluster contacts are provided by Cys-100, Cys-131, Cys-191, and Arg-263.

This sequence belongs to the radical SAM superfamily. Biotin synthase family. Homodimer. [4Fe-4S] cluster serves as cofactor. It depends on [2Fe-2S] cluster as a cofactor.

It carries out the reaction (4R,5S)-dethiobiotin + (sulfur carrier)-SH + 2 reduced [2Fe-2S]-[ferredoxin] + 2 S-adenosyl-L-methionine = (sulfur carrier)-H + biotin + 2 5'-deoxyadenosine + 2 L-methionine + 2 oxidized [2Fe-2S]-[ferredoxin]. It functions in the pathway cofactor biosynthesis; biotin biosynthesis; biotin from 7,8-diaminononanoate: step 2/2. Catalyzes the conversion of dethiobiotin (DTB) to biotin by the insertion of a sulfur atom into dethiobiotin via a radical-based mechanism. This Shewanella frigidimarina (strain NCIMB 400) protein is Biotin synthase.